Reading from the N-terminus, the 39-residue chain is Hementin (39 aa).

It depends on a divalent metal cation as a cofactor. Expressed mainly in the posterior salivary glands and, to a lesser extent, in the anterior salivary glands and secreted into the proboscis (at protein level).

The protein localises to the secreted. Inhibited by EDTA, cysteine, DTT and sodium phosphate. Partially inhibited by EGTA, citrate, Tris and glycine. Not inhibited by DFP, PMSF, iodoacetic acid and leupeptin. Requires sodium chloride concentrations higher than 0.15 M for activity. Metalloprotease with anticoagulant activity. Cleaves fibrinogen Aalpha (FGA), gamma (FGG) and Bbeta (FGB) chains after positions 'Asn-121', 'Lys-160' and 'Pro-102', respectively. Breaks down cross-linked and non-cross-linked fibrin clots. Prevents and reverts platelet aggregation induced by ADP and collagen. Prevents thrombin-induced platelet clotting. Does not affect plasma levels of coagulation factors prothrombin (F2), V (F5), VII (F7), VIII (F8), IX (F9), X (F10), XI (F11), XII (F12), plasma kallikrein (KLKB1) and kininogen-1 (KNG1). In Haementeria ghilianii (Amazon leech), this protein is Hementin.